The chain runs to 284 residues: Protoheme IX farnesyltransferase (284 aa).

The next 9 membrane-spanning stretches (helical) occupy residues 2–19 (SLVV…PVTV), 23–45 (IALT…NMWS), 69–89 (GEAL…LGLA), 92–112 (LFAA…YSMW), 121–141 (IVIG…VATG), 148–168 (LFMF…LALF), 194–214 (VLVY…TGTG), 217–237 (LYLA…VRTW), and 263–283 (LFLH…GLGG).

It belongs to the UbiA prenyltransferase family. Protoheme IX farnesyltransferase subfamily. In terms of assembly, interacts with CtaA.

The protein resides in the cell inner membrane. The enzyme catalyses heme b + (2E,6E)-farnesyl diphosphate + H2O = Fe(II)-heme o + diphosphate. It participates in porphyrin-containing compound metabolism; heme O biosynthesis; heme O from protoheme: step 1/1. In terms of biological role, converts heme B (protoheme IX) to heme O by substitution of the vinyl group on carbon 2 of heme B porphyrin ring with a hydroxyethyl farnesyl side group. This is Protoheme IX farnesyltransferase from Cereibacter sphaeroides (Rhodobacter sphaeroides).